We begin with the raw amino-acid sequence, 341 residues long: Ketol-acid reductoisomerase (NADP(+)) (341 aa).

Residues 2-181 (AKVYYNGDAN…GATRAGVLET (180 aa)) enclose the KARI N-terminal Rossmann domain. Residues 25–28 (YGSQ), arginine 48, serine 52, and 82–85 (DEKQ) each bind NADP(+). The active site involves histidine 107. An NADP(+)-binding site is contributed by glycine 133. The KARI C-terminal knotted domain occupies 182–327 (TFKEETETDL…RELRSMMPFV (146 aa)). Aspartate 190, glutamate 194, glutamate 226, and glutamate 230 together coordinate Mg(2+). Serine 251 is a binding site for substrate.

It belongs to the ketol-acid reductoisomerase family. The cofactor is Mg(2+).

The enzyme catalyses (2R)-2,3-dihydroxy-3-methylbutanoate + NADP(+) = (2S)-2-acetolactate + NADPH + H(+). The catalysed reaction is (2R,3R)-2,3-dihydroxy-3-methylpentanoate + NADP(+) = (S)-2-ethyl-2-hydroxy-3-oxobutanoate + NADPH + H(+). Its pathway is amino-acid biosynthesis; L-isoleucine biosynthesis; L-isoleucine from 2-oxobutanoate: step 2/4. It participates in amino-acid biosynthesis; L-valine biosynthesis; L-valine from pyruvate: step 2/4. Functionally, involved in the biosynthesis of branched-chain amino acids (BCAA). Catalyzes an alkyl-migration followed by a ketol-acid reduction of (S)-2-acetolactate (S2AL) to yield (R)-2,3-dihydroxy-isovalerate. In the isomerase reaction, S2AL is rearranged via a Mg-dependent methyl migration to produce 3-hydroxy-3-methyl-2-ketobutyrate (HMKB). In the reductase reaction, this 2-ketoacid undergoes a metal-dependent reduction by NADPH to yield (R)-2,3-dihydroxy-isovalerate. In Geobacillus sp. (strain WCH70), this protein is Ketol-acid reductoisomerase (NADP(+)).